Reading from the N-terminus, the 189-residue chain is Peptidyl-tRNA hydrolase (189 aa).

Tyrosine 17 lines the tRNA pocket. Residue histidine 22 is the Proton acceptor of the active site. Phenylalanine 65, asparagine 67, and asparagine 113 together coordinate tRNA.

This sequence belongs to the PTH family. As to quaternary structure, monomer.

The protein localises to the cytoplasm. The catalysed reaction is an N-acyl-L-alpha-aminoacyl-tRNA + H2O = an N-acyl-L-amino acid + a tRNA + H(+). In terms of biological role, hydrolyzes ribosome-free peptidyl-tRNAs (with 1 or more amino acids incorporated), which drop off the ribosome during protein synthesis, or as a result of ribosome stalling. Functionally, catalyzes the release of premature peptidyl moieties from peptidyl-tRNA molecules trapped in stalled 50S ribosomal subunits, and thus maintains levels of free tRNAs and 50S ribosomes. This Mycoplasma genitalium (strain ATCC 33530 / DSM 19775 / NCTC 10195 / G37) (Mycoplasmoides genitalium) protein is Peptidyl-tRNA hydrolase.